Reading from the N-terminus, the 332-residue chain is Twinfilin-1 (332 aa).

The region spanning 5-132 (SGIVAEQALL…VDLKNFDSAR (128 aa)) is the ADF-H 1 domain. 2 positions are modified to phosphoserine: serine 167 and serine 172. Positions 173–300 (PLSLTFRVNS…DKSLLMATNK (128 aa)) constitute an ADF-H 2 domain. Residues 301 to 332 (EDSLDHGSNPDLPNKSNLKFNKPKGPLRKRRT) form a disordered region. A compositionally biased stretch (basic residues) spans 321-332 (NKPKGPLRKRRT).

Belongs to the actin-binding proteins ADF family. Twinfilin subfamily. Interacts with G-actin; ADP-actin form.

The protein resides in the cytoplasm. Its subcellular location is the cytoskeleton. Actin-binding protein involved in motile and morphological processes. Inhibits actin polymerization, likely by sequestering G-actin. Prevents actin filament assembly by forming a 1:1 complex with actin monomers, and inhibits the nucleotide exchange reaction of actin monomers. The polypeptide is Twinfilin-1 (TWF1) (Saccharomyces cerevisiae (strain ATCC 204508 / S288c) (Baker's yeast)).